The primary structure comprises 510 residues: Conditioned medium factor receptor 1 (510 aa).

The Cytoplasmic portion of the chain corresponds to 1–36 (MDSKYIQKTLSAITEQITKNAAVQKVLDNKFVKEHK). The helical transmembrane segment at 37–55 (YAAAAATVGLGVVAATTIV) threads the bilayer. Topologically, residues 56–510 (KAVNCEGKRY…QGKKQIKKLD (455 aa)) are extracellular.

The protein resides in the membrane. In terms of biological role, receptor for cmfA, that appears to mediate the G-independent cmfA signal transduction. The chain is Conditioned medium factor receptor 1 (cmfB) from Dictyostelium discoideum (Social amoeba).